Reading from the N-terminus, the 1151-residue chain is MSTWQLFPDSSGDGFRWEVAGRILQSVSDSTPTKALESTAPLPSMADLLLQGCSKLIAREEAMPGEIPMFRTGLGKSVVLKESSIAKAKSILAEKVTYSDLRNTNCSIPQMRQVDTAETLPMFRTASGKSVPLKESSIAKAMSILGSDKIIDSDNVLPRESGFGVSNSLFQTASNKKVNVSSAGLARAKALLGLEEDDLNGFNHVNQSSSSSQQHGWSGLKTHEEFDATVVKHHSGTPGQYEDYVSGKRSEVLNPSLKVPPTKFQTAGGKSLSVSAEALKRARNLLGDPELGSFFDDVAGGDQFFTPEKDERLSDIAINNGSANRGYIAHEEKTSNKHTPNSFVSPLWSSSKQFSSVNLENLASGGNLIKKFDAAVDETDCALNATHGLSNNRSLASDMAVNNSKVNGFIPRGRQPGRPADQPLVDITNRRDTAYAYNKQDSTQKKRLGKTVSVSPFKRPRISSFKTPSKKHALQASSGLSVVSCDTLTSKKVLSTRYPEKSPRVYIKDFFGMHPTATTRMDYVPDHVRRIKSSNADKYVFCDESSSNKVGAETFLQMLAESGASLQHASRKWVTNHYRWIVWKLACYDIYYPAKCRGNFLTITNVLEELKYRYEREVNHGHCSAIKRILSGDAPASSMMVLCISAINPKTDNDSQEAHCSDSCSNVKVELTDGWYSMNAALDVVLTKQLNAGKLFVGQKLRILGAGLSGWATPTSPLEAVISSTICLLLNINGTYRAHWADRLGFCKEIGVPLALNCIKCNGGPVPKTLAGIKRIYPILYKERLGEKKSIVRSERIESRIIQLHNQRRSALVEGIMCEYQRGINGVHSQNDTDSEEGAKIFKLLETAAEPEFLMAEMSPEQLRSFTTYKAKFEAAQQMRKEKSVAETLEDAGLGERNVTPFMRIRLVGLTSLSYEGEHNPKEGIVTIWDPTERQRTELTEGKIYMMKGLVPINSDSEILYLHARGSSSRWQPLSPKDSENFQPFFNPRKPISLSNLGEIPLSSEFDIAAYVVYVGNAYTDVLQKKQWVFVTDGSAQHSGEISNSLLAISFSTSFMDDSSVSHISHNLVGSVVGFCNLIKRAKDVTNEIWVAEAAENSVYFINAEAAYSSHLKTSSAHIQTWAKLSSSKSVIHELRQRVLSIIGACKSPSC.

4 BRCA2 repeats span residues 63–97 (MPGEIPMFRTGLGKSVVLKESSIAKAKSILAEKVT), 116–150 (TAETLPMFRTASGKSVPLKESSIAKAMSILGSDKI), 163–197 (FGVSNSLFQTASNKKVNVSSAGLARAKALLGLEED), and 257–291 (LKVPPTKFQTAGGKSLSVSAEALKRARNLLGDPEL). The segment at 408–427 (GFIPRGRQPGRPADQPLVDI) is disordered.

Interacts with RAD51 and DMC1. Interacts with DSS1(I). Expressed in flower buds.

Its function is as follows. Involved in double-strand break repair and/or homologous recombination by mediating RAD51- and DMC1-facilitated DNA repair. Plays an essential role in both somatic and meiotic homologous recombination. Is crucial for the formation of RAD51 and DMC1 foci during male meiotic homologous recombination in prophase I. This Arabidopsis thaliana (Mouse-ear cress) protein is Protein BREAST CANCER SUSCEPTIBILITY 2 homolog A.